The sequence spans 168 residues: Thioredoxin Y, chloroplastic (168 aa).

A chloroplast-targeting transit peptide spans M1–R58. The Thioredoxin domain maps to V59–E165. Catalysis depends on nucleophile residues C89 and C92. C89 and C92 are joined by a disulfide.

It belongs to the thioredoxin family. Plant Y-type subfamily.

Its subcellular location is the plastid. The protein resides in the chloroplast. In terms of biological role, probable thiol-disulfide oxidoreductase that may participate in various redox reactions. The polypeptide is Thioredoxin Y, chloroplastic (Oryza sativa subsp. japonica (Rice)).